Here is a 479-residue protein sequence, read N- to C-terminus: MPDDEEKLQLLADVERLKKILRQKDEMLEEMEDDLKNQGKPCSSKLSLEERAQELSEQLRDLHVEMDGKNATILDRDALIDSLRSEIDKLEKINKEFANGSVIPEHDDSNSFGESEMLRISEDCQKYKETATALYERNAELEKEAVNLKDEIESMMDHIRDLKNHMETRDEEIARLEGELFDERNSHEGKLAARGNSMFSEVIDAERKVEEDLKVLHGENRALKGMVKRLRMEVEEVEERLRSSTKRFNVTRMTTSDIDVKEMRRLRDRVCHLETERVHLWERMFIKMRSIPKREVGALITGYFKSFELSIASVKGGFDGLMKDNEKYVTIIRGLQQEVENLKADIVQLQFDNKCAHRKAAPVVNKDFEHPLLAAPLKTLNNGRPSFFIKPKNVEPMPQLGHSLSSIAVTPQKPAAKFTTRSSIKDDTSEWAERRMKAQAEKKLATPTPRYNYIKLSEPVPKFKPAVLQMPSTSETKEN.

3 coiled-coil regions span residues Asp4 to Leu180, Glu210 to Val250, and Leu321 to His357.

Interacts with Zwilch homolog zwl-1, a component of the RZZ complex. Interacts with mdf-1 and mdf-2.

It localises to the chromosome. The protein resides in the centromere. The protein localises to the kinetochore. Its subcellular location is the cytoplasm. It is found in the cytoskeleton. It localises to the spindle pole. Transient kinetochore component required for chromosome and spindle pole alignment and chromosome segregation during mitosis. Functions downstream of the RZZ complex to mediate kinetochore-microtubule attachments and nuclear envelope breakdown during cell division. Required for kinetochore assembly and localizes the checkpoint proteins mdf-1 and mdf-2, dynein and dynactin to unattached kinetochores. Dynein is believed to control the initial lateral interaction between the kinetochore and spindle microtubules and to facilitate the subsequent formation of end-on kinetochore-microtubule attachments mediated by the NDC80 complex. Required for embryonic development. The chain is Spindly-like protein spdl-1 from Caenorhabditis elegans.